The sequence spans 476 residues: Protein transport protein SEC61 subunit alpha (476 aa).

Residues 1–33 lie on the Cytoplasmic side of the membrane; that stretch reads MSSLRFLDLVKPFVPFLPEVQQPETKIPFNQKL. Residues 34–54 form a helical membrane-spanning segment; it reads MWTGLTLLIFLVMSQMPLYGI. Over 55–76 the chain is Lumenal; that stretch reads VSSDTSDPLYWLRMMMASNRGT. The helical transmembrane segment at 77–97 threads the bilayer; it reads LMELGITPIISSGMVFQLLAG. At 98–119 the chain is on the cytoplasmic side; it reads THMIDVNLDLKADRELYQTAQK. The chain crosses the membrane as a helical span at residues 120–140; the sequence is LFAVILSIGTATVYVFTGLYG. Over 141–146 the chain is Lumenal; that stretch reads PPSDLG. A helical transmembrane segment spans residues 147–167; sequence AGIVFLLILQLVVAGMIVILL. The Cytoplasmic portion of the chain corresponds to 168–246; that stretch reads DELLQKGYGL…YRQNLPNIMN (79 aa). A helical membrane pass occupies residues 247–267; the sequence is LLATLVVFAAVIYLQGFRVEI. Residues 268–361 lie on the Lumenal side of the membrane; the sequence is PVKSSRQRGA…KDALLDPIHT (94 aa). The helical transmembrane segment at 362-382 threads the bilayer; it reads AVYIAYMLTACAVFSKTWIEV. The Cytoplasmic segment spans residues 383-415; the sequence is SGSSPRDVAKQLKDQGLVMAGHREQSMYKELKR. A helical transmembrane segment spans residues 416–434; sequence IIPTAAAFGGACIGALSVA. Topologically, residues 435 to 440 are lumenal; that stretch reads SDLMGA. The chain crosses the membrane as a helical span at residues 441–458; it reads LGSGTGTLLAVTIIYGYF. Residues 459–476 are Cytoplasmic-facing; sequence EIAAKEGDLQGMKGMIMG.

The protein belongs to the SecY/SEC61-alpha family. In terms of assembly, heterotrimeric complex composed of SEC61-alpha, SEC61-beta and SEC61-gamma.

Its subcellular location is the endoplasmic reticulum membrane. Functionally, appears to play a crucial role in the insertion of secretory and membrane polypeptides into the ER. It is required for assembly of membrane and secretory proteins and is essential for cell growth. It interacts with other membrane proteins required for protein translocation. Upon binding to SEC62/63 complex, secretory precursor polypeptides may engage SEC61 to begin membrane penetration event. A cycle of assembly and disassembly of SEC62/63 from SEC61 may govern the activity of the translocase. This is Protein transport protein SEC61 subunit alpha (sec-61) from Neurospora crassa (strain ATCC 24698 / 74-OR23-1A / CBS 708.71 / DSM 1257 / FGSC 987).